We begin with the raw amino-acid sequence, 471 residues long: Ribulose bisphosphate carboxylase large chain (471 aa).

An N6,N6,N6-trimethyllysine modification is found at Lys5. Substrate is bound by residues Asn114 and Thr164. Lys166 acts as the Proton acceptor in catalysis. Lys168 provides a ligand contact to substrate. Positions 192, 194, and 195 each coordinate Mg(2+). At Lys192 the chain carries N6-carboxylysine. The active-site Proton acceptor is the His285. Substrate-binding residues include Arg286, His318, and Ser370.

Belongs to the RuBisCO large chain family. Type I subfamily. As to quaternary structure, heterohexadecamer of 8 large chains and 8 small chains; disulfide-linked. The disulfide link is formed within the large subunit homodimers. Requires Mg(2+) as cofactor. Post-translationally, the disulfide bond which can form in the large chain dimeric partners within the hexadecamer appears to be associated with oxidative stress and protein turnover.

Its subcellular location is the plastid. It is found in the chloroplast. It carries out the reaction 2 (2R)-3-phosphoglycerate + 2 H(+) = D-ribulose 1,5-bisphosphate + CO2 + H2O. The enzyme catalyses D-ribulose 1,5-bisphosphate + O2 = 2-phosphoglycolate + (2R)-3-phosphoglycerate + 2 H(+). In terms of biological role, ruBisCO catalyzes two reactions: the carboxylation of D-ribulose 1,5-bisphosphate, the primary event in carbon dioxide fixation, as well as the oxidative fragmentation of the pentose substrate in the photorespiration process. Both reactions occur simultaneously and in competition at the same active site. In Strychnos nux-vomica (Poison nut), this protein is Ribulose bisphosphate carboxylase large chain.